The primary structure comprises 351 residues: N(4)-bis(aminopropyl)spermidine synthase (351 aa).

Belongs to the branched-chain polyamine synthase family.

It localises to the cytoplasm. It carries out the reaction 2 S-adenosyl 3-(methylsulfanyl)propylamine + spermidine = N(4)-bis(aminopropyl)spermidine + 2 S-methyl-5'-thioadenosine + 2 H(+). Its pathway is amine and polyamine biosynthesis. Functionally, involved in the biosynthesis of branched-chain polyamines, which support the growth of thermophiles under high-temperature conditions. Catalyzes the sequential condensation of spermidine with the aminopropyl groups of decarboxylated S-adenosylmethionines to produce N(4)-bis(aminopropyl)spermidine via N(4)-aminopropylspermidine. Can also use spermine to produce N(4)-aminopropylspermine. This Thermococcus kodakarensis (strain ATCC BAA-918 / JCM 12380 / KOD1) (Pyrococcus kodakaraensis (strain KOD1)) protein is N(4)-bis(aminopropyl)spermidine synthase.